The chain runs to 69 residues: NADH dehydrogenase [ubiquinone] 1 beta subcomplex subunit 2 (69 aa).

Belongs to the complex I NDUFB2 subunit family. As to quaternary structure, complex I is composed of at least 49 different subunits.

Its subcellular location is the mitochondrion inner membrane. Accessory subunit of the mitochondrial membrane respiratory chain NADH dehydrogenase (Complex I), that is believed not to be involved in catalysis. Complex I functions in the transfer of electrons from NADH to the respiratory chain. The immediate electron acceptor for the enzyme is believed to be ubiquinone. In Arabidopsis thaliana (Mouse-ear cress), this protein is NADH dehydrogenase [ubiquinone] 1 beta subcomplex subunit 2.